The sequence spans 317 residues: Trem-like transcript 1 protein (317 aa).

Residues Met1–Ala20 form the signal peptide. One can recognise an Ig-like V-type domain in the interval Asp21–Leu122. The Extracellular portion of the chain corresponds to Asp21–Pro175. Intrachain disulfides connect Cys39-Cys105 and Cys53-Cys60. The tract at residues Thr147–Glu166 is disordered. A helical membrane pass occupies residues Leu176–Val196. Residues Met197–Lys317 lie on the Cytoplasmic side of the membrane. Cys208 carries the S-palmitoyl cysteine lipid modification. A disordered region spans residues Gln212–Leu278. Residues Ser261–Pro275 are compositionally biased toward pro residues. Ser283 is modified (phosphoserine). The short motif at Val284–Val289 is the ITIM element. The disordered stretch occupies residues Asp295–Lys317. Polar residues predominate over residues Pro308–Lys317.

When phosphorylated, interacts with PTPN11. When phosphorylated, interacts with PTPN6. In terms of processing, phosphorylated on tyrosine residues. In terms of tissue distribution, highly expressed in bone marrow leukocytes, splenic megakaryocytes and platelets. Detected in brain, liver and in peritoneal monocytes.

The protein resides in the cell membrane. The protein localises to the cytoplasm. Its function is as follows. Cell surface receptor that may play a role in the innate and adaptive immune response. This Mus musculus (Mouse) protein is Trem-like transcript 1 protein (Treml1).